Consider the following 430-residue polypeptide: 3-deoxy-D-manno-octulosonic acid transferase (430 aa).

A helical; Signal-anchor transmembrane segment spans residues 12 to 32 (AFLVAAFLAAAPRIFYKVVFH). Glu66 acts as the Proton acceptor in catalysis. CMP contacts are provided by residues 274 to 275 (PR), 314 to 316 (MGI), and 341 to 344 (NLLE).

The protein belongs to the glycosyltransferase group 1 family. Glycosyltransferase 30 subfamily.

Its subcellular location is the cell inner membrane. It catalyses the reaction lipid IVA (E. coli) + CMP-3-deoxy-beta-D-manno-octulosonate = alpha-Kdo-(2-&gt;6)-lipid IVA (E. coli) + CMP + H(+). The enzyme catalyses alpha-Kdo-(2-&gt;6)-lipid IVA (E. coli) + CMP-3-deoxy-beta-D-manno-octulosonate = alpha-Kdo-(2-&gt;4)-alpha-Kdo-(2-&gt;6)-lipid IVA (E. coli) + CMP + H(+). It carries out the reaction alpha-Kdo-(2-&gt;4)-alpha-Kdo-(2-&gt;6)-lipid IVA (E. coli) + CMP-3-deoxy-beta-D-manno-octulosonate = alpha-Kdo-(2-&gt;8)-alpha-Kdo-(2-&gt;4)-alpha-Kdo-(2-&gt;6)-lipid IVA (E. coli) + CMP + H(+). The protein operates within bacterial outer membrane biogenesis; LPS core biosynthesis. In terms of biological role, involved in lipopolysaccharide (LPS) biosynthesis. Catalyzes the transfer of three 3-deoxy-D-manno-octulosonate (Kdo) residues from CMP-Kdo to lipid IV(A), the tetraacyldisaccharide-1,4'-bisphosphate precursor of lipid A. Thus generates the genus-specific LPS epitope of Chlamydia, composed of the trisaccharide alpha-Kdo-(2-&gt;8)-alpha-Kdo-(2-&gt;4)-alpha-Kdo. The polypeptide is 3-deoxy-D-manno-octulosonic acid transferase (waaA) (Chlamydia muridarum (strain MoPn / Nigg)).